A 704-amino-acid chain; its full sequence is Elongation factor G (704 aa).

The region spanning 8–290 (ARYRNIGISA…AVIDYLPSPV (283 aa)) is the tr-type G domain. GTP is bound by residues 17-24 (AHIDAGKT), 88-92 (DTPGH), and 142-145 (NKMD). N6-acetyllysine is present on residues Lys504 and Lys643.

It belongs to the TRAFAC class translation factor GTPase superfamily. Classic translation factor GTPase family. EF-G/EF-2 subfamily.

The protein localises to the cytoplasm. Its function is as follows. Catalyzes the GTP-dependent ribosomal translocation step during translation elongation. During this step, the ribosome changes from the pre-translocational (PRE) to the post-translocational (POST) state as the newly formed A-site-bound peptidyl-tRNA and P-site-bound deacylated tRNA move to the P and E sites, respectively. Catalyzes the coordinated movement of the two tRNA molecules, the mRNA and conformational changes in the ribosome. The chain is Elongation factor G from Shigella flexneri.